The sequence spans 1470 residues: Histone acetyltransferase HAC4 (1470 aa).

Polar residues predominate over residues 1-10 (MNNNKEVPQN). Disordered stretches follow at residues 1–20 (MNNN…SSSA) and 342–376 (TNFQ…HSQN). A compositionally biased stretch (low complexity) spans 11-20 (SVAVSSSSSA). Positions 342–365 (TNFQSAPNNRDNLPQVSQQLSNHG) are enriched in polar residues. The TAZ-type 1 zinc-finger motif lies at 416–495 (GQTSSNTVLR…SISCRTCVAV (80 aa)). Residues 518–566 (SSKCQPKKSSKSRQAYKKGGAEAPSVDADLQRSIKRPKLHRPSQNITPE) form a disordered region. Positions 522–533 (QPKKSSKSRQAY) are enriched in basic residues. A PHD-type zinc finger spans residues 764–841 (HYVCAPCYNE…KYTCPSCYIQ (78 aa)). Positions 856–1293 (VPGATSLPVT…ILYHLHNPTA (438 aa)) constitute a CBP/p300-type HAT domain. Residues 979-981 (LDS), 998-999 (RT), and Trp1054 each bind acetyl-CoA. 2 consecutive ZZ-type zinc fingers follow at residues 1175–1238 (HLQH…IKDV) and 1295–1347 (AFAT…SSTD). Cys1180, Cys1183, Cys1195, Cys1198, Cys1204, Cys1207, His1220, His1228, Cys1300, Cys1303, Cys1315, Cys1318, Cys1324, Cys1327, His1335, and His1337 together coordinate Zn(2+). A TAZ-type 2 zinc finger spans residues 1358–1436 (SQSYQVKLEK…KCTVPKCSGL (79 aa)).

Rosette leaves, stems and flowers.

The protein resides in the nucleus. The enzyme catalyses L-lysyl-[protein] + acetyl-CoA = N(6)-acetyl-L-lysyl-[protein] + CoA + H(+). Acetyltransferase enzyme. Acetylates histones, giving a specific tag for transcriptional activation. This is Histone acetyltransferase HAC4 (HAC4) from Arabidopsis thaliana (Mouse-ear cress).